A 543-amino-acid polypeptide reads, in one-letter code: CTP synthase (543 aa).

The amidoligase domain stretch occupies residues 1 to 265 (MTNYIFVTGG…DELVVQRFGL (265 aa)). Ser-13 is a binding site for CTP. Ser-13 serves as a coordination point for UTP. ATP is bound by residues 14 to 19 (SLGKGI) and Asp-71. Residues Asp-71 and Glu-139 each contribute to the Mg(2+) site. CTP is bound by residues 146–148 (DIE), 186–191 (KTKPTQ), and Lys-222. Residues 186 to 191 (KTKPTQ) and Lys-222 contribute to the UTP site. An ATP-binding site is contributed by 238-240 (KDA). The region spanning 290–541 (TIGMVGKYVE…VKAAGEYYKN (252 aa)) is the Glutamine amidotransferase type-1 domain. Gly-351 serves as a coordination point for L-glutamine. The Nucleophile; for glutamine hydrolysis role is filled by Cys-378. L-glutamine is bound by residues 379-382 (LGMQ), Glu-402, and Arg-469. Residues His-514 and Glu-516 contribute to the active site.

It belongs to the CTP synthase family. In terms of assembly, homotetramer.

It catalyses the reaction UTP + L-glutamine + ATP + H2O = CTP + L-glutamate + ADP + phosphate + 2 H(+). The enzyme catalyses L-glutamine + H2O = L-glutamate + NH4(+). It carries out the reaction UTP + NH4(+) + ATP = CTP + ADP + phosphate + 2 H(+). Its pathway is pyrimidine metabolism; CTP biosynthesis via de novo pathway; CTP from UDP: step 2/2. Allosterically activated by GTP, when glutamine is the substrate; GTP has no effect on the reaction when ammonia is the substrate. The allosteric effector GTP functions by stabilizing the protein conformation that binds the tetrahedral intermediate(s) formed during glutamine hydrolysis. Inhibited by the product CTP, via allosteric rather than competitive inhibition. In terms of biological role, catalyzes the ATP-dependent amination of UTP to CTP with either L-glutamine or ammonia as the source of nitrogen. Regulates intracellular CTP levels through interactions with the four ribonucleotide triphosphates. The protein is CTP synthase of Pseudoalteromonas atlantica (strain T6c / ATCC BAA-1087).